The following is a 132-amino-acid chain: Large ribosomal subunit protein bL17 (132 aa).

Belongs to the bacterial ribosomal protein bL17 family. Part of the 50S ribosomal subunit. Contacts protein L32.

The protein is Large ribosomal subunit protein bL17 of Shewanella woodyi (strain ATCC 51908 / MS32).